A 302-amino-acid polypeptide reads, in one-letter code: Putative peptide permease protein BOV_A0350 (302 aa).

Positions 1–22 (MRSSIHASRLRKMGQSIPASTG) are disordered. A run of 6 helical transmembrane segments spans residues 38 to 58 (IFGL…PLWL), 101 to 121 (LLVA…IGAI), 147 to 167 (IFLL…VVVI), 200 to 222 (AGLG…VVYA), 230 to 250 (ILLE…AASW), and 268 to 288 (WQWL…NFIG). An ABC transmembrane type-1 domain is found at 97–288 (GRISLLVAVS…LAVLAINFIG (192 aa)).

This sequence belongs to the binding-protein-dependent transport system permease family. As to quaternary structure, the complex is composed of two ATP-binding proteins (BOV_A0347 and BOV_A0348), two transmembrane proteins (BOV_A0350 and BOV_A0351) and a solute-binding protein (BOV_A0352).

It localises to the cell inner membrane. Its function is as follows. Probably part of an ABC transporter complex that could be involved in peptide import. Probably responsible for the translocation of the substrate across the membrane. This is Putative peptide permease protein BOV_A0350 from Brucella ovis (strain ATCC 25840 / 63/290 / NCTC 10512).